The primary structure comprises 361 residues: Chorismate synthase (361 aa).

NADP(+) contacts are provided by R48 and R54. Residues 125–127 (RSS), 238–239 (NA), G278, 293–297 (KPTSS), and R319 contribute to the FMN site.

Belongs to the chorismate synthase family. In terms of assembly, homotetramer. The cofactor is FMNH2.

The catalysed reaction is 5-O-(1-carboxyvinyl)-3-phosphoshikimate = chorismate + phosphate. It participates in metabolic intermediate biosynthesis; chorismate biosynthesis; chorismate from D-erythrose 4-phosphate and phosphoenolpyruvate: step 7/7. Its function is as follows. Catalyzes the anti-1,4-elimination of the C-3 phosphate and the C-6 proR hydrogen from 5-enolpyruvylshikimate-3-phosphate (EPSP) to yield chorismate, which is the branch point compound that serves as the starting substrate for the three terminal pathways of aromatic amino acid biosynthesis. This reaction introduces a second double bond into the aromatic ring system. The chain is Chorismate synthase from Salmonella paratyphi A (strain ATCC 9150 / SARB42).